The following is a 235-amino-acid chain: Aspartate/glutamate leucyltransferase (235 aa).

It belongs to the R-transferase family. Bpt subfamily.

The protein localises to the cytoplasm. It carries out the reaction N-terminal L-glutamyl-[protein] + L-leucyl-tRNA(Leu) = N-terminal L-leucyl-L-glutamyl-[protein] + tRNA(Leu) + H(+). The enzyme catalyses N-terminal L-aspartyl-[protein] + L-leucyl-tRNA(Leu) = N-terminal L-leucyl-L-aspartyl-[protein] + tRNA(Leu) + H(+). Functionally, functions in the N-end rule pathway of protein degradation where it conjugates Leu from its aminoacyl-tRNA to the N-termini of proteins containing an N-terminal aspartate or glutamate. The polypeptide is Aspartate/glutamate leucyltransferase (Pseudomonas paraeruginosa (strain DSM 24068 / PA7) (Pseudomonas aeruginosa (strain PA7))).